The sequence spans 257 residues: Zinc transporter ZupT (257 aa).

8 consecutive transmembrane segments (helical) span residues Leu-5–Gly-25, Val-32–Met-52, Gly-61–Leu-81, Ala-109–Val-129, Leu-137–Ala-157, Ile-171–Ile-191, Leu-195–Leu-215, and Gly-236–Ile-256. Residues Asn-120 and Glu-123 each coordinate Fe(2+). Zn(2+) contacts are provided by Glu-123 and His-148. The Fe(2+) site is built by Asn-149, Glu-152, and Glu-181. Residue Glu-152 participates in Zn(2+) binding.

Belongs to the ZIP transporter (TC 2.A.5) family. ZupT subfamily.

It localises to the cell inner membrane. The catalysed reaction is Zn(2+)(in) = Zn(2+)(out). Mediates zinc uptake. May also transport other divalent cations. This Salmonella agona (strain SL483) protein is Zinc transporter ZupT.